The primary structure comprises 254 residues: Phosphomannomutase (254 aa).

Asp-19 acts as the Nucleophile in catalysis. The Mg(2+) site is built by Asp-19 and Asp-21. Catalysis depends on Asp-21, which acts as the Proton donor/acceptor. Residues Arg-28, Arg-130, Arg-141, Arg-148, Ser-186, and Asp-188 each contribute to the alpha-D-mannose 1-phosphate site. 4 residues coordinate Mg(2+): Asp-216, Phe-228, Asp-230, and Thr-233. Position 240 is a phosphoserine (Ser-240).

The protein belongs to the eukaryotic PMM family. Homodimer.

The protein localises to the cytoplasm. It carries out the reaction alpha-D-mannose 1-phosphate = D-mannose 6-phosphate. The protein operates within nucleotide-sugar biosynthesis; GDP-alpha-D-mannose biosynthesis; alpha-D-mannose 1-phosphate from D-fructose 6-phosphate: step 2/2. In terms of biological role, involved in the synthesis of the GDP-mannose and dolichol-phosphate-mannose required for a number of critical mannosyl transfer reactions such as folding and glycosylation of secretory proteins in the ER lumen. The protein is Phosphomannomutase of Saccharomyces cerevisiae (strain ATCC 204508 / S288c) (Baker's yeast).